We begin with the raw amino-acid sequence, 206 residues long: Large ribosomal subunit protein uL4 (206 aa).

Belongs to the universal ribosomal protein uL4 family. In terms of assembly, part of the 50S ribosomal subunit.

In terms of biological role, one of the primary rRNA binding proteins, this protein initially binds near the 5'-end of the 23S rRNA. It is important during the early stages of 50S assembly. It makes multiple contacts with different domains of the 23S rRNA in the assembled 50S subunit and ribosome. Functionally, forms part of the polypeptide exit tunnel. In Methylocella silvestris (strain DSM 15510 / CIP 108128 / LMG 27833 / NCIMB 13906 / BL2), this protein is Large ribosomal subunit protein uL4.